We begin with the raw amino-acid sequence, 127 residues long: uncharacterized protein (127 aa).

The disordered stretch occupies residues 69-94 (GDGGSVPEKGKHGILGAQGQEHPGLN).

This is an uncharacterized protein from Homo sapiens (Human).